A 202-amino-acid chain; its full sequence is Holliday junction branch migration complex subunit RuvA (202 aa).

The domain I stretch occupies residues 1–64; that stretch reads MIDYVSGTLV…EDDESLYGFA (64 aa). The tract at residues 65–143 is domain II; that stretch reads TKAERTVFET…DLDVLEDTSP (79 aa). The interval 144-149 is flexible linker; sequence LSGGSD. The tract at residues 150–202 is domain III; sequence ARAEARADALEALTELGLSKADAERSIRQVLRDNAGIQSADELVRRALKADQE.

Belongs to the RuvA family. Homotetramer. Forms an RuvA(8)-RuvB(12)-Holliday junction (HJ) complex. HJ DNA is sandwiched between 2 RuvA tetramers; dsDNA enters through RuvA and exits via RuvB. An RuvB hexamer assembles on each DNA strand where it exits the tetramer. Each RuvB hexamer is contacted by two RuvA subunits (via domain III) on 2 adjacent RuvB subunits; this complex drives branch migration. In the full resolvosome a probable DNA-RuvA(4)-RuvB(12)-RuvC(2) complex forms which resolves the HJ.

The protein resides in the cytoplasm. In terms of biological role, the RuvA-RuvB-RuvC complex processes Holliday junction (HJ) DNA during genetic recombination and DNA repair, while the RuvA-RuvB complex plays an important role in the rescue of blocked DNA replication forks via replication fork reversal (RFR). RuvA specifically binds to HJ cruciform DNA, conferring on it an open structure. The RuvB hexamer acts as an ATP-dependent pump, pulling dsDNA into and through the RuvAB complex. HJ branch migration allows RuvC to scan DNA until it finds its consensus sequence, where it cleaves and resolves the cruciform DNA. This chain is Holliday junction branch migration complex subunit RuvA, found in Salinibacter ruber (strain DSM 13855 / M31).